The chain runs to 202 residues: Small ribosomal subunit protein uS4 (202 aa).

Residues 16–43 (GELPGLSRKTPRRAYPPGQHGQGRRKRS) are disordered. Positions 90–152 (MRLDNTVFRL…DNSRRMVETN (63 aa)) constitute an S4 RNA-binding domain.

Belongs to the universal ribosomal protein uS4 family. Part of the 30S ribosomal subunit. Contacts protein S5. The interaction surface between S4 and S5 is involved in control of translational fidelity.

Functionally, one of the primary rRNA binding proteins, it binds directly to 16S rRNA where it nucleates assembly of the body of the 30S subunit. With S5 and S12 plays an important role in translational accuracy. This is Small ribosomal subunit protein uS4 from Crocosphaera subtropica (strain ATCC 51142 / BH68) (Cyanothece sp. (strain ATCC 51142)).